The sequence spans 370 residues: DNA primase large subunit PriL (370 aa).

4 residues coordinate [4Fe-4S] cluster: C230, C301, C310, and C317. Residues 337 to 370 (EGEEAQGKEQGKEKDDGKEKENGKESEVKKKKEK) form a disordered region.

This sequence belongs to the eukaryotic-type primase large subunit family. In terms of assembly, heterodimer of a small subunit (PriS) and a large subunit (PriL). It depends on [4Fe-4S] cluster as a cofactor.

In terms of biological role, regulatory subunit of DNA primase, an RNA polymerase that catalyzes the synthesis of short RNA molecules used as primers for DNA polymerase during DNA replication. Stabilizes and modulates the activity of the small subunit, increasing the rate of DNA synthesis, and conferring RNA synthesis capability. The DNA polymerase activity may enable DNA primase to also catalyze primer extension after primer synthesis. May also play a role in DNA repair. The chain is DNA primase large subunit PriL from Methanosarcina mazei (strain ATCC BAA-159 / DSM 3647 / Goe1 / Go1 / JCM 11833 / OCM 88) (Methanosarcina frisia).